We begin with the raw amino-acid sequence, 129 residues long: Glycine cleavage system H protein (129 aa).

The 83-residue stretch at 24 to 106 folds into the Lipoyl-binding domain; it reads TFTVGISEHA…YGDGWLFRIK (83 aa). The residue at position 65 (Lys-65) is an N6-lipoyllysine.

This sequence belongs to the GcvH family. In terms of assembly, the glycine cleavage system is composed of four proteins: P, T, L and H. Requires (R)-lipoate as cofactor.

In terms of biological role, the glycine cleavage system catalyzes the degradation of glycine. The H protein shuttles the methylamine group of glycine from the P protein to the T protein. This chain is Glycine cleavage system H protein, found in Pseudoalteromonas atlantica (strain T6c / ATCC BAA-1087).